The following is a 100-amino-acid chain: Urease subunit gamma (100 aa).

This sequence belongs to the urease gamma subunit family. Heterotrimer of UreA (gamma), UreB (beta) and UreC (alpha) subunits. Three heterotrimers associate to form the active enzyme.

It is found in the cytoplasm. The catalysed reaction is urea + 2 H2O + H(+) = hydrogencarbonate + 2 NH4(+). It functions in the pathway nitrogen metabolism; urea degradation; CO(2) and NH(3) from urea (urease route): step 1/1. This Acinetobacter baylyi (strain ATCC 33305 / BD413 / ADP1) protein is Urease subunit gamma.